The chain runs to 245 residues: Adenosylcobinamide-GDP ribazoletransferase (245 aa).

5 consecutive transmembrane segments (helical) span residues 31–51, 61–81, 113–133, 138–158, and 192–212; these read FGRAVLCYPLVGVLIGVVLYA, PLLQAALLLSLWVALSGALHL, VAVVVLVLVLLLKFSALAALL, AGLLPLAPWLARSSLPLLFLT, and LAFGLAGLLALLVTLMLFAWL.

It belongs to the CobS family. It depends on Mg(2+) as a cofactor.

The protein localises to the cell inner membrane. The enzyme catalyses alpha-ribazole + adenosylcob(III)inamide-GDP = adenosylcob(III)alamin + GMP + H(+). It catalyses the reaction alpha-ribazole 5'-phosphate + adenosylcob(III)inamide-GDP = adenosylcob(III)alamin 5'-phosphate + GMP + H(+). Its pathway is cofactor biosynthesis; adenosylcobalamin biosynthesis; adenosylcobalamin from cob(II)yrinate a,c-diamide: step 7/7. Its function is as follows. Joins adenosylcobinamide-GDP and alpha-ribazole to generate adenosylcobalamin (Ado-cobalamin). Also synthesizes adenosylcobalamin 5'-phosphate from adenosylcobinamide-GDP and alpha-ribazole 5'-phosphate. The polypeptide is Adenosylcobinamide-GDP ribazoletransferase (Pseudomonas aeruginosa (strain ATCC 15692 / DSM 22644 / CIP 104116 / JCM 14847 / LMG 12228 / 1C / PRS 101 / PAO1)).